Consider the following 484-residue polypeptide: Monocarboxylate transporter 2 (484 aa).

Residues 1-16 (MPAPTAVPPPHPLPPD) are Cytoplasmic-facing. Residues 17–37 (GGWGWVVVGASFISIGFSYAF) traverse the membrane as a helical segment. Residues 38 to 60 (PKSVTVFFKDIQEIFRAGHSKVA) lie on the Extracellular side of the membrane. The helical transmembrane segment at 61 to 81 (WISSIMLAVMYAGGPISSVLV) threads the bilayer. Residues 82–87 (NKYGSR) are Cytoplasmic-facing. Residues 88–108 (PVVVIGGLLCCTGMILASFST) form a helical membrane-spanning segment. Topologically, residues 109–116 (SMIQLYLT) are extracellular. A helical membrane pass occupies residues 117–137 (IGFISGLGLAFNLQPALTILG). Residues 138–144 (KYFYRRR) lie on the Cytoplasmic side of the membrane. The helical transmembrane segment at 145-165 (PLASGLAMTGSPVFLSSLAPF) threads the bilayer. Residues 166-174 (NQYLFNSYG) lie on the Extracellular side of the membrane. The helical transmembrane segment at 175–195 (LKGSFLILGGIFLHSCVAGSL) threads the bilayer. Topologically, residues 196-245 (MRPVGTSQQSPKSKSKVSSRHDSSTKKAPKLTLAQRINMFLDFSLFKHRG) are cytoplasmic. The disordered stretch occupies residues 198-223 (PVGTSQQSPKSKSKVSSRHDSSTKKA). A helical transmembrane segment spans residues 246–266 (FLIYLSGNVIMFLGFFAPVIF). Residues 267 to 281 (LSPYAKNRGVDDYKA) are Extracellular-facing. Residues 282 to 302 (AYLLSVMAFVDMFSRPCGGLI) form a helical membrane-spanning segment. Residues 303 to 311 (ANTRLVRPR) are Cytoplasmic-facing. A helical membrane pass occupies residues 312-332 (IQYFFSLAIVFTGVCHLLCPL). At 333 to 337 (AESYT) the chain is on the extracellular side. The chain crosses the membrane as a helical span at residues 338 to 358 (ALVVYAIFFGYGFGSVSSILF). Residues 359–372 (ETLMDLVGPARFSS) lie on the Cytoplasmic side of the membrane. The helical transmembrane segment at 373 to 393 (AVGLVTIVECCPVLLGPPLAG) threads the bilayer. Residues 394–405 (KLVDETGEHKYL) lie on the Extracellular side of the membrane. Residues 406 to 426 (FVASGAIVVLAGIWLFIGNAI) form a helical membrane-spanning segment. At 427 to 484 (NYRLLAKERKREKARKKKSPNRHSKELESLSKSNQDDVAVRVPQAHRSPSDKERESNI) the chain is on the cytoplasmic side. Positions 437–484 (REKARKKKSPNRHSKELESLSKSNQDDVAVRVPQAHRSPSDKERESNI) are disordered. Over residues 438-448 (EKARKKKSPNR) the composition is skewed to basic residues. 2 stretches are compositionally biased toward basic and acidic residues: residues 449 to 465 (HSKELESLSKSNQDDVA) and 474 to 484 (SPSDKERESNI).

It belongs to the major facilitator superfamily. Monocarboxylate porter (TC 2.A.1.13) family. In terms of assembly, homodimer. Interacts with GRID2IP. Interacts with EMB; interaction mediates SLC16A7 targeting to the plasma membrane. Interacts with isoform 2 of BSG.

The protein resides in the cell membrane. Its subcellular location is the basolateral cell membrane. It localises to the cytoplasm. It catalyses the reaction 3-methyl-2-oxobutanoate(out) + H(+)(out) = 3-methyl-2-oxobutanoate(in) + H(+)(in). It carries out the reaction (S)-lactate(in) + H(+)(in) = (S)-lactate(out) + H(+)(out). The enzyme catalyses acetoacetate(out) + H(+)(out) = acetoacetate(in) + H(+)(in). The catalysed reaction is (R)-3-hydroxybutanoate(out) + H(+)(out) = (R)-3-hydroxybutanoate(in) + H(+)(in). It catalyses the reaction 4-methyl-2-oxopentanoate(out) + H(+)(out) = 4-methyl-2-oxopentanoate(in) + H(+)(in). It carries out the reaction pyruvate(out) + H(+)(out) = pyruvate(in) + H(+)(in). The enzyme catalyses (S)-3-hydroxybutanoate(out) + H(+)(out) = (S)-3-hydroxybutanoate(in) + H(+)(in). With respect to regulation, transport activity exhibits steep dependence on substrate concentration. Substrate concentration sensitivity of SLC16A7 arises from the strong inter-subunit cooperativity of the SLC16A7 dimer during transport. Inhibited by AR-C155858. Proton-coupled monocarboxylate symporter. Catalyzes the rapid transport across the plasma membrane of monocarboxylates such as L-lactate, pyruvate and ketone bodies, acetoacetate, beta-hydroxybutyrate and acetate. Dimerization is functionally required and both subunits work cooperatively in transporting substrate. The protein is Monocarboxylate transporter 2 (SLC16A7) of Meriones unguiculatus (Mongolian jird).